Consider the following 244-residue polypeptide: 5-oxoprolinase subunit A (244 aa).

The protein belongs to the LamB/PxpA family. Forms a complex composed of PxpA, PxpB and PxpC.

It catalyses the reaction 5-oxo-L-proline + ATP + 2 H2O = L-glutamate + ADP + phosphate + H(+). Its function is as follows. Catalyzes the cleavage of 5-oxoproline to form L-glutamate coupled to the hydrolysis of ATP to ADP and inorganic phosphate. This is 5-oxoprolinase subunit A from Shigella flexneri serotype 5b (strain 8401).